Consider the following 599-residue polypeptide: Histone-arginine methyltransferase CARMER (599 aa).

Residues 127-434 (ASQYFQFYGY…QRQSYDVEID (308 aa)) form the SAM-dependent MTase PRMT-type domain. Residues Gln140, Arg149, Gly173, Glu195, Glu224, and Thr252 each contribute to the S-adenosyl-L-methionine site. Arg487 carries the post-translational modification Asymmetric dimethylarginine; by autocatalysis.

It belongs to the class I-like SAM-binding methyltransferase superfamily. Protein arginine N-methyltransferase family. In terms of assembly, homodimer. The dimethylated protein is the major form.

The protein localises to the cytoplasm. It is found in the nucleus. The enzyme catalyses L-arginyl-[protein] + 2 S-adenosyl-L-methionine = N(omega),N(omega)-dimethyl-L-arginyl-[protein] + 2 S-adenosyl-L-homocysteine + 2 H(+). Its function is as follows. Methylates (mono- and asymmetric dimethylation) the guanidino nitrogens of arginyl residues in proteins. May methylate histone H3 at 'Arg-17' and activate transcription via chromatin remodeling. The chain is Histone-arginine methyltransferase CARMER (Art4) from Culex quinquefasciatus (Southern house mosquito).